Reading from the N-terminus, the 235-residue chain is Regulator of G-protein signaling 18 (235 aa).

Serine 49 bears the Phosphoserine mark. The 117-residue stretch at 86 to 202 (SFDKLLSHRD…LKSETYLHLI (117 aa)) folds into the RGS domain. A phosphoserine mark is found at serine 216 and serine 218.

In terms of tissue distribution, expressed in bone marrow, spleen, fetal liver and lung. At very low levels expressed in heart.

It is found in the cytoplasm. Its function is as follows. Inhibits signal transduction by increasing the GTPase activity of G protein alpha subunits thereby driving them into their inactive GDP-bound form. Binds to G(i) alpha-1, G(i) alpha-2, G(i) alpha-3 and G(q) alpha. In Mus musculus (Mouse), this protein is Regulator of G-protein signaling 18 (Rgs18).